Here is a 412-residue protein sequence, read N- to C-terminus: Probable histone-binding protein rba-1 (412 aa).

6 WD repeats span residues asparagine 117–lysine 157, glycine 169–glycine 209, glycine 219–threonine 259, glycine 262–tyrosine 302, histidine 306–serine 346, and glycine 365–glutamate 405.

The protein belongs to the WD repeat RBAP46/RBAP48/MSI1 family. As to quaternary structure, binds directly to helix 1 of the histone fold of histone H4, a region that is not accessible when H4 is in chromatin. Interacts with zft-11; the interaction is required to suppress the activation of non-neuronal genes in neurons.

It is found in the nucleus. Functionally, core histone-binding subunit that may target chromatin assembly factors, chromatin remodeling factors and histone deacetylases to their histone substrates in a manner that is regulated by nucleosomal DNA. Plays a role in regulating cell cycle progression. Required to repress the induction of vulval development by Ras signaling. In association with the zinc finger protein ztf-11, negatively regulates the expression of non-neuronal genes during neurogenesis. This Caenorhabditis elegans protein is Probable histone-binding protein rba-1.